We begin with the raw amino-acid sequence, 100 residues long: NADH-quinone oxidoreductase subunit K (100 aa).

3 consecutive transmembrane segments (helical) span residues 4-24 (YEYYVVLSGLLMVLGLIGIII), 29-49 (IAMLLSTELMLNAVNIAFVAF), and 60-80 (VFVFFILTIAAAEAAVGLGLI).

Belongs to the complex I subunit 4L family. As to quaternary structure, NDH-1 is composed of 14 different subunits. Subunits NuoA, H, J, K, L, M, N constitute the membrane sector of the complex.

Its subcellular location is the cell inner membrane. It carries out the reaction a quinone + NADH + 5 H(+)(in) = a quinol + NAD(+) + 4 H(+)(out). NDH-1 shuttles electrons from NADH, via FMN and iron-sulfur (Fe-S) centers, to quinones in the respiratory chain. The immediate electron acceptor for the enzyme in this species is believed to be ubiquinone. Couples the redox reaction to proton translocation (for every two electrons transferred, four hydrogen ions are translocated across the cytoplasmic membrane), and thus conserves the redox energy in a proton gradient. This chain is NADH-quinone oxidoreductase subunit K, found in Persephonella marina (strain DSM 14350 / EX-H1).